The sequence spans 309 residues: Homoserine O-succinyltransferase (309 aa).

Catalysis depends on cysteine 142, which acts as the Acyl-thioester intermediate. Substrate contacts are provided by lysine 163 and serine 192. Catalysis depends on histidine 235, which acts as the Proton acceptor. Residue glutamate 237 is part of the active site. Arginine 249 is a binding site for substrate.

This sequence belongs to the MetA family.

The protein resides in the cytoplasm. The enzyme catalyses L-homoserine + succinyl-CoA = O-succinyl-L-homoserine + CoA. It participates in amino-acid biosynthesis; L-methionine biosynthesis via de novo pathway; O-succinyl-L-homoserine from L-homoserine: step 1/1. In terms of biological role, transfers a succinyl group from succinyl-CoA to L-homoserine, forming succinyl-L-homoserine. The chain is Homoserine O-succinyltransferase from Photorhabdus laumondii subsp. laumondii (strain DSM 15139 / CIP 105565 / TT01) (Photorhabdus luminescens subsp. laumondii).